Consider the following 379-residue polypeptide: Queuine tRNA-ribosyltransferase (379 aa).

Catalysis depends on D94, which acts as the Proton acceptor. Residues 94-98, D148, Q191, and G218 each bind substrate; that span reads DSGGF. The tract at residues 249–255 is RNA binding; the sequence is GVGSPDA. D268 (nucleophile) is an active-site residue. Residues 273-277 form an RNA binding; important for wobble base 34 recognition region; sequence TRIAR. Residues C306, C308, C311, and H337 each coordinate Zn(2+).

The protein belongs to the queuine tRNA-ribosyltransferase family. In terms of assembly, homodimer. Within each dimer, one monomer is responsible for RNA recognition and catalysis, while the other monomer binds to the replacement base PreQ1. Zn(2+) serves as cofactor.

The enzyme catalyses 7-aminomethyl-7-carbaguanine + guanosine(34) in tRNA = 7-aminomethyl-7-carbaguanosine(34) in tRNA + guanine. Its pathway is tRNA modification; tRNA-queuosine biosynthesis. In terms of biological role, catalyzes the base-exchange of a guanine (G) residue with the queuine precursor 7-aminomethyl-7-deazaguanine (PreQ1) at position 34 (anticodon wobble position) in tRNAs with GU(N) anticodons (tRNA-Asp, -Asn, -His and -Tyr). Catalysis occurs through a double-displacement mechanism. The nucleophile active site attacks the C1' of nucleotide 34 to detach the guanine base from the RNA, forming a covalent enzyme-RNA intermediate. The proton acceptor active site deprotonates the incoming PreQ1, allowing a nucleophilic attack on the C1' of the ribose to form the product. After dissociation, two additional enzymatic reactions on the tRNA convert PreQ1 to queuine (Q), resulting in the hypermodified nucleoside queuosine (7-(((4,5-cis-dihydroxy-2-cyclopenten-1-yl)amino)methyl)-7-deazaguanosine). This chain is Queuine tRNA-ribosyltransferase, found in Staphylococcus epidermidis (strain ATCC 35984 / DSM 28319 / BCRC 17069 / CCUG 31568 / BM 3577 / RP62A).